The chain runs to 799 residues: E3 UFM1-protein ligase 1 homolog (799 aa).

The segment at 429–483 is disordered; it reads TTTTTTTQPSKKKDNLINSDDDDNQDNNKKSSKGKNKKSKQQQSSIQKLINDSED. A compositionally biased stretch (basic residues) spans 458-468; that stretch reads KSSKGKNKKSK. Residues 469-478 are compositionally biased toward low complexity; that stretch reads QQQSSIQKLI.

The protein belongs to the UFL1 family.

Functionally, E3 UFM1-protein ligase that mediates ufmylation of target proteins. The protein is E3 UFM1-protein ligase 1 homolog of Dictyostelium discoideum (Social amoeba).